A 203-amino-acid chain; its full sequence is Urease accessory protein UreG (203 aa).

Gly14–Thr21 contacts GTP.

Belongs to the SIMIBI class G3E GTPase family. UreG subfamily. Homodimer. UreD, UreF and UreG form a complex that acts as a GTP-hydrolysis-dependent molecular chaperone, activating the urease apoprotein by helping to assemble the nickel containing metallocenter of UreC. The UreE protein probably delivers the nickel.

It localises to the cytoplasm. Its function is as follows. Facilitates the functional incorporation of the urease nickel metallocenter. This process requires GTP hydrolysis, probably effectuated by UreG. The protein is Urease accessory protein UreG of Sinorhizobium fredii (strain NBRC 101917 / NGR234).